Here is a 68-residue protein sequence, read N- to C-terminus: Cytochrome c3 (68 aa).

Heme-binding residues include histidine 17, histidine 20, cysteine 26, cysteine 29, histidine 30, histidine 45, cysteine 49, cysteine 52, histidine 53, cysteine 62, cysteine 65, and histidine 66.

Binds 3 heme groups per subunit.

Functionally, participates in sulfate respiration coupled with phosphorylation by transferring electrons from the enzyme dehydrogenase to ferredoxin. This Desulfuromonas acetoxidans (Chloropseudomonas ethylica) protein is Cytochrome c3 (cyd).